A 90-amino-acid chain; its full sequence is MAVKIRLKRIGSKKKPFYRIVVADSRFPRDGRSIETIGTYNPLLDPVEVKIDEEATLKWMHNGAKPSDTVRNLLSREGIMEKFHNQKLGK.

This sequence belongs to the bacterial ribosomal protein bS16 family.

In Listeria monocytogenes serotype 4b (strain F2365), this protein is Small ribosomal subunit protein bS16.